The following is a 689-amino-acid chain: Glycine--tRNA ligase beta subunit (689 aa).

The protein belongs to the class-II aminoacyl-tRNA synthetase family. As to quaternary structure, tetramer of two alpha and two beta subunits.

It is found in the cytoplasm. The catalysed reaction is tRNA(Gly) + glycine + ATP = glycyl-tRNA(Gly) + AMP + diphosphate. This chain is Glycine--tRNA ligase beta subunit, found in Dictyoglomus thermophilum (strain ATCC 35947 / DSM 3960 / H-6-12).